Reading from the N-terminus, the 296-residue chain is Urease accessory protein UreD (296 aa).

It belongs to the UreD family. As to quaternary structure, ureD, UreF and UreG form a complex that acts as a GTP-hydrolysis-dependent molecular chaperone, activating the urease apoprotein by helping to assemble the nickel containing metallocenter of UreC. The UreE protein probably delivers the nickel.

The protein resides in the cytoplasm. Required for maturation of urease via the functional incorporation of the urease nickel metallocenter. The chain is Urease accessory protein UreD from Janthinobacterium sp. (strain Marseille) (Minibacterium massiliensis).